A 105-amino-acid chain; its full sequence is Putative neurotoxin 10 (105 aa).

The N-terminal stretch at 1 to 21 is a signal peptide; that stretch reads MTVSCSKVLLSLCLFLMLLKA.

It belongs to the scolopendra neurotoxin 10 family. Post-translationally, contains 3 disulfide bonds. Expressed by the venom gland.

The protein resides in the secreted. This Scolopendra subspinipes (Vietnamese centipede) protein is Putative neurotoxin 10.